A 435-amino-acid chain; its full sequence is Adenylosuccinate synthetase (435 aa).

GTP-binding positions include 20–26 (GDEGKGK) and 48–50 (GHT). D21 (proton acceptor) is an active-site residue. Mg(2+)-binding residues include D21 and G48. IMP contacts are provided by residues 21–24 (DEGK), 46–49 (NAGH), T134, R148, Q229, T244, and R308. H49 functions as the Proton donor in the catalytic mechanism. Substrate is bound at residue 304-310 (TTTGRPR). GTP contacts are provided by residues R310, 336-338 (KVD), and 422-424 (SMG).

It belongs to the adenylosuccinate synthetase family. In terms of assembly, homodimer. Mg(2+) is required as a cofactor.

It is found in the cytoplasm. It carries out the reaction IMP + L-aspartate + GTP = N(6)-(1,2-dicarboxyethyl)-AMP + GDP + phosphate + 2 H(+). It functions in the pathway purine metabolism; AMP biosynthesis via de novo pathway; AMP from IMP: step 1/2. In terms of biological role, plays an important role in the de novo pathway of purine nucleotide biosynthesis. Catalyzes the first committed step in the biosynthesis of AMP from IMP. The polypeptide is Adenylosuccinate synthetase (Thermoplasma acidophilum (strain ATCC 25905 / DSM 1728 / JCM 9062 / NBRC 15155 / AMRC-C165)).